The sequence spans 416 residues: Hemagglutinin-esterase (416 aa).

The first 14 residues, 1 to 14 (MLSLILFFPSFAFA), serve as a signal peptide directing secretion. Positions 4–121 (LILFFPSFAF…GVDSYMELKT (118 aa)) are esterase domain first part. Residues 15-393 (VTPVTPYFGP…ESVDVISSSY (379 aa)) are Virion surface-facing. The Nucleophile role is filled by serine 37. A disulfide bridge links cysteine 41 with cysteine 57. 2 N-linked (GlcNAc...) asparagine; by host glycosylation sites follow: asparagine 59 and asparagine 76. Disulfide bonds link cysteine 88–cysteine 136, cysteine 108–cysteine 156, cysteine 192–cysteine 273, cysteine 200–cysteine 246, and cysteine 206–cysteine 213. Residues 122 to 263 (SFNIKLNQMA…GTHNASIVGN (142 aa)) form a receptor binding region. 3 N-linked (GlcNAc...) asparagine; by host glycosylation sites follow: asparagine 257, asparagine 278, and asparagine 294. The esterase domain second part stretch occupies residues 264–379 (FLFYPTKSYC…SCPQYVKLFD (116 aa)). A disulfide bridge links cysteine 304 with cysteine 309. Asparagine 322 is a glycosylation site (N-linked (GlcNAc...) asparagine; by host). Histidine 328 functions as the Charge relay system in the catalytic mechanism. An N-linked (GlcNAc...) asparagine; by host glycan is attached at asparagine 343. Cysteine 346 and cysteine 371 are disulfide-bonded. The helical transmembrane segment at 394–414 (FVATWVLLVVVVILIFVIISF) threads the bilayer. Residues 415 to 416 (FC) lie on the Intravirion side of the membrane.

The protein belongs to the influenza type C/coronaviruses hemagglutinin-esterase family. In terms of assembly, homodimer. N-glycosylated.

It is found in the virion membrane. Its subcellular location is the host cell membrane. It catalyses the reaction N-acetyl-9-O-acetylneuraminate + H2O = N-acetylneuraminate + acetate + H(+). The enzyme catalyses N-acetyl-4-O-acetylneuraminate + H2O = N-acetylneuraminate + acetate + H(+). Structural protein that makes short spikes at the surface of the virus. Contains receptor binding and receptor-destroying activities. Mediates de-O-acetylation of N-acetyl-9-O-acetylneuraminic acid, which is probably the receptor determinant recognized by the virus on the surface of erythrocytes and susceptible cells. This receptor-destroying activity is important for virus release as it probably helps preventing self-aggregation and ensures the efficient spread of the progeny virus from cell to cell. May serve as a secondary viral attachment protein for initiating infection, the spike protein being the major one. Seems to be a 'luxury' protein that is not absolutely necessary for virus infection in culture. However, its presence in the virus may alter its pathogenicity. May become a target for both the humoral and the cellular branches of the immune system. In Homo sapiens (Human), this protein is Hemagglutinin-esterase (HE).